The following is a 563-amino-acid chain: MVKVSSSTTSSSSSSSPDEESDLQNLLEESDSQIDQFRISDEAAEQRPTFDVESLRSRLRRSFKLNLTKKQSIFIFLPIVIILIYLSTDFSNYFSVKVPNSAFRSNTLTGRVHESDLQALYLLRKQESDLFSIWNHTVSNLSTIDDVKSAVFRQISLNRQIQNALLSPHKTGNVDIGGSSDGYFAGGSCRKVDQKLNGRKTIQWKPRPDKFLFAICLSGQMSNHLICLEKHMFFAALLKRVLVIPSHRFDYHYSRIIDIDRINTCLGRTVVVSFEEFWKKDKNRKKHHHVHINRFICYFSKPEPCYVDKEHITKLKALGITVGGKLDTPWEEDIARPSNKTAEEVEANFRSDDDVIAIGDVFYANVEREWVMQPGGPVAHKCRTLIEPNRLILLTAQRFIQTFLGKNYIALHFRRHGFLKFCNAKNPSCFFPIPQAASCITRLIEKVEAPVLYLSTDAAESETGLLQSLLILNGKTVPLVKRPARDSAEKWDALLYRHGLEGDSQVEAMLDKTICALSSVFIGASGSTFTEDILRLRKDWGTASECDEYLCANEQPNFIADHE.

Residues 1 to 16 are compositionally biased toward low complexity; it reads MVKVSSSTTSSSSSSS. The interval 1–25 is disordered; it reads MVKVSSSTTSSSSSSSPDEESDLQN. Residues 73–93 traverse the membrane as a helical; Signal-anchor for type II membrane protein segment; the sequence is IFIFLPIVIILIYLSTDFSNY. N-linked (GlcNAc...) asparagine glycosylation is found at N135, N140, and N339. Substrate contacts are provided by residues 412-414 and 528-529; these read HFR and TF.

It belongs to the glycosyltransferase GT106 family.

Its subcellular location is the membrane. It functions in the pathway glycan metabolism. The chain is O-fucosyltransferase 14 from Arabidopsis thaliana (Mouse-ear cress).